The chain runs to 276 residues: tRNA dimethylallyltransferase (276 aa).

Positions 9–12 are interaction with substrate tRNA; the sequence is DSLS.

It belongs to the IPP transferase family. Monomer. The cofactor is Mg(2+).

It catalyses the reaction adenosine(37) in tRNA + dimethylallyl diphosphate = N(6)-dimethylallyladenosine(37) in tRNA + diphosphate. Its function is as follows. Catalyzes the transfer of a dimethylallyl group onto the adenine at position 37 in tRNAs that read codons beginning with uridine, leading to the formation of N6-(dimethylallyl)adenosine (i(6)A). This chain is tRNA dimethylallyltransferase (miaA), found in Helicobacter pylori (strain HPAG1).